Consider the following 370-residue polypeptide: GDSL esterase/lipase At1g33811 (370 aa).

A signal peptide spans 1–24 (MGILRFVLLISLNLVLFGFKTTVS). Ser41 serves as the catalytic Nucleophile. N-linked (GlcNAc...) asparagine glycans are attached at residues Asn203, Asn241, and Asn242. Residues Asp336 and His339 contribute to the active site.

It belongs to the 'GDSL' lipolytic enzyme family.

It is found in the secreted. This is GDSL esterase/lipase At1g33811 from Arabidopsis thaliana (Mouse-ear cress).